The chain runs to 709 residues: Elongation factor G (709 aa).

The tr-type G domain maps to 9 to 295 (AKVRNIGIMA…AVVRYLPTPL (287 aa)). GTP-binding positions include 18-25 (AHIDAGKT), 86-90 (DTPGH), and 140-143 (NKLD).

The protein belongs to the TRAFAC class translation factor GTPase superfamily. Classic translation factor GTPase family. EF-G/EF-2 subfamily.

It is found in the cytoplasm. Its function is as follows. Catalyzes the GTP-dependent ribosomal translocation step during translation elongation. During this step, the ribosome changes from the pre-translocational (PRE) to the post-translocational (POST) state as the newly formed A-site-bound peptidyl-tRNA and P-site-bound deacylated tRNA move to the P and E sites, respectively. Catalyzes the coordinated movement of the two tRNA molecules, the mRNA and conformational changes in the ribosome. The chain is Elongation factor G from Streptomyces avermitilis (strain ATCC 31267 / DSM 46492 / JCM 5070 / NBRC 14893 / NCIMB 12804 / NRRL 8165 / MA-4680).